A 259-amino-acid polypeptide reads, in one-letter code: DNA-directed RNA polymerase subunit Rpo3 (259 aa).

Belongs to the archaeal Rpo3/eukaryotic RPB3 RNA polymerase subunit family. In terms of assembly, part of the RNA polymerase complex.

It is found in the cytoplasm. The enzyme catalyses RNA(n) + a ribonucleoside 5'-triphosphate = RNA(n+1) + diphosphate. DNA-dependent RNA polymerase (RNAP) catalyzes the transcription of DNA into RNA using the four ribonucleoside triphosphates as substrates. This chain is DNA-directed RNA polymerase subunit Rpo3, found in Pyrobaculum arsenaticum (strain DSM 13514 / JCM 11321 / PZ6).